A 226-amino-acid chain; its full sequence is Cytidylate kinase (226 aa).

10 to 18 provides a ligand contact to ATP; sequence GPASSGKST.

The protein belongs to the cytidylate kinase family. Type 1 subfamily.

It localises to the cytoplasm. The catalysed reaction is CMP + ATP = CDP + ADP. It carries out the reaction dCMP + ATP = dCDP + ADP. In Streptococcus pyogenes serotype M28 (strain MGAS6180), this protein is Cytidylate kinase.